Consider the following 112-residue polypeptide: uncharacterized protein (112 aa).

Asn-29 and Asn-60 each carry an N-linked (GlcNAc...) asparagine; by host glycan. The chain crosses the membrane as a helical span at residues 66–86 (IFNGLGFILIVIFIYLLLITL).

Belongs to the asfivirus B117L family.

It localises to the host membrane. Its subcellular location is the virion. This is an uncharacterized protein from Ornithodoros (relapsing fever ticks).